A 133-amino-acid chain; its full sequence is MSWQTYVDDHLMCEIEGTNNHLTAAAILGVDGSVWAQSANFPQFKPDEISAVVKEFDEAGTLAPTGLHLGGTKYMVIQGEAGQVIRGKKGPGGICVKKTGQALIFGIYDEPVTPGQCNMIVERLGDYLVEQGM.

A disulfide bridge connects residues cysteine 95 and cysteine 117.

The protein belongs to the profilin family. As to quaternary structure, occurs in many kinds of cells as a complex with monomeric actin in a 1:1 ratio. In terms of tissue distribution, expressed in pollen.

The protein resides in the cytoplasm. It is found in the cytoskeleton. Binds to actin and affects the structure of the cytoskeleton. At high concentrations, profilin prevents the polymerization of actin, whereas it enhances it at low concentrations. This Kali turgidum (Prickly saltwort) protein is Profilin Sal k 4.0101.